Reading from the N-terminus, the 300-residue chain is ADP,ATP carrier protein 2 (300 aa).

3 Solcar repeats span residues 8–100 (VAFI…YKQV), 113–203 (RYFI…ARGM), and 214–299 (VSWA…IKKV). 5 helical membrane passes run 10–39 (FIKD…LLLQ), 77–101 (LANV…KQVF), 112–132 (TRYF…SLCF), 181–201 (VSVQ…DTAR), and 213–233 (YVSW…SYPF). Arg82 and Lys94 together coordinate ADP. An ADP-binding site is contributed by Arg237. Positions 237-242 (RRRMMM) are important for transport activity. Positions 237-242 (RRRMMM) match the Nucleotide carrier signature motif motif. Residues 276–293 (AFSNVLRGTGGAFVLVLY) traverse the membrane as a helical segment.

This sequence belongs to the mitochondrial carrier (TC 2.A.29) family. As to quaternary structure, monomer.

It localises to the mitochondrion inner membrane. It catalyses the reaction ADP(in) + ATP(out) = ADP(out) + ATP(in). The matrix-open state (m-state) is inhibited by the membrane-permeable bongkrekic acid (BKA). The cytoplasmic-open state (c-state) is inhibited by the membrane-impermeable toxic inhibitor carboxyatractyloside (CATR). Functionally, ADP:ATP antiporter that mediates import of ADP into the mitochondrial matrix for ATP synthesis, and export of ATP out to fuel the cell. Cycles between the cytoplasmic-open state (c-state) and the matrix-open state (m-state): operates by the alternating access mechanism with a single substrate-binding site intermittently exposed to either the cytosolic (c-state) or matrix (m-state) side of the inner mitochondrial membrane. This is ADP,ATP carrier protein 2 from Anopheles gambiae (African malaria mosquito).